The following is a 209-amino-acid chain: MSESREQEQALTLAVIMQSVQCIREVARTGDTETSRYEPLIEGLLGEYDGSTDALYGAARLAPGLRRVVEQLEDPQEADTTRYVASIFHLERRLMKRQAVLQRIAEGIEQARSQADYFENPAHTSVIRSVGDLYSQTISEMGPRLMIRGEQQHLENERNAALIRALLLCGIRGASLWRDNGGGRMTLLFRRQAIAGAARDLLEALPTEA.

This sequence belongs to the HflD family.

Its subcellular location is the cytoplasm. The protein resides in the cell inner membrane. The chain is High frequency lysogenization protein HflD homolog from Halorhodospira halophila (strain DSM 244 / SL1) (Ectothiorhodospira halophila (strain DSM 244 / SL1)).